The chain runs to 324 residues: Cuticle collagen lon-3 (324 aa).

The first 30 residues, 1 to 30 (MSVTTATSGALIFSGASLLVSLFAAASIYS), serve as a signal peptide directing secretion. Residues 119–324 (VENTCPTGPD…AWRRKHKRVY (206 aa)) form a disordered region. Triple-helical region regions lie at residues 129–152 (GEEG…DGQD), 170–229 (GLPG…KGDD), and 235–294 (GRQG…SGLP). Low complexity-rich tracts occupy residues 136–151 (PDGQ…FDGQ), 168–181 (PQGL…QGAP), 210–223 (PTGA…PGAS), 235–246 (GRQGQRGQPGEQ), and 261–273 (EGPP…VGVP). Over residues 296–311 (KDAEYCKCPTRDDGGN) the composition is skewed to basic and acidic residues. A compositionally biased stretch (basic residues) spans 314-324 (RAWRRKHKRVY).

Belongs to the cuticular collagen family. As to quaternary structure, collagen polypeptide chains are complexed within the cuticle by disulfide bonds and other types of covalent cross-links.

Functionally, nematode cuticles are composed largely of collagen-like proteins. The cuticle functions both as an exoskeleton and as a barrier to protect the worm from its environment. Dose-dependent regulator of body length and shape. The chain is Cuticle collagen lon-3 (lon-3) from Caenorhabditis elegans.